Consider the following 240-residue polypeptide: Pyridoxine 5'-phosphate synthase (240 aa).

A 3-amino-2-oxopropyl phosphate-binding site is contributed by N7. 9 to 10 (DH) lines the 1-deoxy-D-xylulose 5-phosphate pocket. R18 lines the 3-amino-2-oxopropyl phosphate pocket. Residue H43 is the Proton acceptor of the active site. 1-deoxy-D-xylulose 5-phosphate contacts are provided by R45 and H50. E70 functions as the Proton acceptor in the catalytic mechanism. A 1-deoxy-D-xylulose 5-phosphate-binding site is contributed by T100. H191 acts as the Proton donor in catalysis. Residues G192 and 213–214 (GH) contribute to the 3-amino-2-oxopropyl phosphate site.

It belongs to the PNP synthase family. Homooctamer; tetramer of dimers.

It localises to the cytoplasm. The catalysed reaction is 3-amino-2-oxopropyl phosphate + 1-deoxy-D-xylulose 5-phosphate = pyridoxine 5'-phosphate + phosphate + 2 H2O + H(+). The protein operates within cofactor biosynthesis; pyridoxine 5'-phosphate biosynthesis; pyridoxine 5'-phosphate from D-erythrose 4-phosphate: step 5/5. Functionally, catalyzes the complicated ring closure reaction between the two acyclic compounds 1-deoxy-D-xylulose-5-phosphate (DXP) and 3-amino-2-oxopropyl phosphate (1-amino-acetone-3-phosphate or AAP) to form pyridoxine 5'-phosphate (PNP) and inorganic phosphate. The polypeptide is Pyridoxine 5'-phosphate synthase (Acaryochloris marina (strain MBIC 11017)).